The primary structure comprises 152 residues: SsrA-binding protein (152 aa).

Belongs to the SmpB family.

It localises to the cytoplasm. Required for rescue of stalled ribosomes mediated by trans-translation. Binds to transfer-messenger RNA (tmRNA), required for stable association of tmRNA with ribosomes. tmRNA and SmpB together mimic tRNA shape, replacing the anticodon stem-loop with SmpB. tmRNA is encoded by the ssrA gene; the 2 termini fold to resemble tRNA(Ala) and it encodes a 'tag peptide', a short internal open reading frame. During trans-translation Ala-aminoacylated tmRNA acts like a tRNA, entering the A-site of stalled ribosomes, displacing the stalled mRNA. The ribosome then switches to translate the ORF on the tmRNA; the nascent peptide is terminated with the 'tag peptide' encoded by the tmRNA and targeted for degradation. The ribosome is freed to recommence translation, which seems to be the essential function of trans-translation. The sequence is that of SsrA-binding protein from Helicobacter pylori (strain HPAG1).